Consider the following 205-residue polypeptide: Glycerol-3-phosphate acyltransferase 1 (205 aa).

Helical transmembrane passes span threonine 7–leucine 27, tryptophan 52–valine 74, histidine 78–phenylalanine 100, leucine 125–phenylalanine 145, and alanine 160–isoleucine 180.

It belongs to the PlsY family. Probably interacts with PlsX.

The protein resides in the cell membrane. The catalysed reaction is an acyl phosphate + sn-glycerol 3-phosphate = a 1-acyl-sn-glycero-3-phosphate + phosphate. It functions in the pathway lipid metabolism; phospholipid metabolism. In terms of biological role, catalyzes the transfer of an acyl group from acyl-phosphate (acyl-PO(4)) to glycerol-3-phosphate (G3P) to form lysophosphatidic acid (LPA). This enzyme utilizes acyl-phosphate as fatty acyl donor, but not acyl-CoA or acyl-ACP. In Lactobacillus acidophilus (strain ATCC 700396 / NCK56 / N2 / NCFM), this protein is Glycerol-3-phosphate acyltransferase 1.